The primary structure comprises 288 residues: Shikimate kinase (288 aa).

P81–A91 is an ATP binding site.

This sequence belongs to the GHMP kinase family. Archaeal shikimate kinase subfamily.

It is found in the cytoplasm. It catalyses the reaction shikimate + ATP = 3-phosphoshikimate + ADP + H(+). The protein operates within metabolic intermediate biosynthesis; chorismate biosynthesis; chorismate from D-erythrose 4-phosphate and phosphoenolpyruvate: step 5/7. The sequence is that of Shikimate kinase from Methanothrix thermoacetophila (strain DSM 6194 / JCM 14653 / NBRC 101360 / PT) (Methanosaeta thermophila).